Reading from the N-terminus, the 273-residue chain is NH(3)-dependent NAD(+) synthetase (273 aa).

47–54 (GISGGQDS) lines the ATP pocket. Position 53 (Asp-53) interacts with Mg(2+). Deamido-NAD(+) is bound at residue Arg-139. Thr-159 is a binding site for ATP. Position 164 (Glu-164) interacts with Mg(2+). Lys-172 and Asp-179 together coordinate deamido-NAD(+). ATP is bound by residues Lys-188 and Thr-210. A deamido-NAD(+)-binding site is contributed by 259-260 (HK).

It belongs to the NAD synthetase family. Homodimer.

It carries out the reaction deamido-NAD(+) + NH4(+) + ATP = AMP + diphosphate + NAD(+) + H(+). The protein operates within cofactor biosynthesis; NAD(+) biosynthesis; NAD(+) from deamido-NAD(+) (ammonia route): step 1/1. Functionally, catalyzes the ATP-dependent amidation of deamido-NAD to form NAD. Uses ammonia as a nitrogen source. This Staphylococcus aureus (strain MRSA252) protein is NH(3)-dependent NAD(+) synthetase.